The chain runs to 1235 residues: High-affinity potassium transport protein (1235 aa).

Ser15 carries the phosphoserine modification. The next 2 helical transmembrane spans lie at 49-70 and 78-98; these read SFIAVHYFYTISLTLITSILLY and IDTLFLAAGAVTQGGLNTVDI. Asn100 carries an N-linked (GlcNAc...) asparagine glycan. Residues 107–127 traverse the membrane as a helical segment; that stretch reads IVLYIVCCISTPIAVHSCLAF. 4 disordered regions span residues 161 to 310, 323 to 344, 361 to 441, and 488 to 565; these read LTAR…SPAD, EATAEDEGPPLVIGSPADGTRY, KIKI…TKPP, and RLST…HQLQ. Residues 164–179 are compositionally biased toward polar residues; that stretch reads RTMTKNRTGTQRTSYP. Asn169 is a glycosylation site (N-linked (GlcNAc...) asparagine). The segment covering 198–217 has biased composition (basic and acidic residues); that stretch reads VNRDEQDSVHSDQNSHDISR. Residues 219-232 show a composition bias toward low complexity; that stretch reads SSNNNTNHNGSSGS. 2 N-linked (GlcNAc...) asparagine glycosylation sites follow: Asn222 and Asn227. The span at 237-247 shows a compositional bias: acidic residues; sequence VKEDETDDNGE. Polar residues predominate over residues 248-274; that stretch reads YQENNSYSTVGSSSNTVADESLNQKPK. A glycan (N-linked (GlcNAc...) asparagine) is linked at Asn251. Asn369 and Asn383 each carry an N-linked (GlcNAc...) asparagine glycan. Composition is skewed to polar residues over residues 370 to 415 and 490 to 502; these read ESNT…SNSG and STGSIEKNSSNNV. A Phosphoserine modification is found at Ser414. Asn497, Asn501, and Asn532 each carry an N-linked (GlcNAc...) asparagine glycan. The segment covering 510–539 has biased composition (acidic residues); it reads DMDDDDDDDDNDGDNNEEYFADNESGDEDE. Phosphoserine is present on Ser534. Basic and acidic residues predominate over residues 540-563; that stretch reads RVQQSEPHSDSELKSHQQQQEKHQ. Asn580 and Asn677 each carry an N-linked (GlcNAc...) asparagine glycan. The segment at 671–706 is disordered; the sequence is HDGSHKNGSEEASSDSNENIYSTNGGSDHNGLNNYP. A compositionally biased stretch (polar residues) spans 680 to 706; sequence EEASSDSNENIYSTNGGSDHNGLNNYP. Transmembrane regions (helical) follow at residues 778–800, 813–834, 838–858, 862–882, and 898–918; these read ILVVYYVGWHIVAFVMLVPWIIL, VSPTWWGFWTAMSAFNDLGLTL, SMMSFNKAVYPLIVMIWFIII, GFPILLRCIIWIMFKISPDLS, and CFTLLFPKAATWWLLLTLAGL. Asn919 carries an N-linked (GlcNAc...) asparagine glycan. The next 2 helical transmembrane spans lie at 923–943 and 971–991; these read WILFIILDFGSTVVKSLSKGY and SIQVSYMLMMYVSVLPLAISI. Residues 1003 to 1063 form a disordered region; sequence GLYGDMGGEP…KKKKKTENPN (61 aa). Residues 1010-1031 show a composition bias toward acidic residues; it reads GEPEDTDTEDDGNDEDDDEENE. An N-linked (GlcNAc...) asparagine glycan is attached at Asn1030. Residues 1036-1049 are compositionally biased toward low complexity; the sequence is QSSQRSSSNNNNNN. 2 helical membrane passes run 1078–1098 and 1111–1131; these read QLSFDLWFLFLGLFIICICEG and IFAILFEIVSAYGTVGLSLGY. A glycan (N-linked (GlcNAc...) asparagine) is linked at Asn1135.

It belongs to the TrkH potassium transport family.

It is found in the membrane. In terms of biological role, this protein is required for high-affinity potassium transport. This is High-affinity potassium transport protein (TRK1) from Saccharomyces cerevisiae (strain ATCC 204508 / S288c) (Baker's yeast).